We begin with the raw amino-acid sequence, 253 residues long: uncharacterized protein (253 aa).

Residues 4–73 (FGKSTADRVK…IDVSGVTVLQ (70 aa)) enclose the BON 1 domain. The segment covering 79 to 93 (AAQTAPTTPAQTSPS) has biased composition (low complexity). The tract at residues 79–105 (AAQTAPTTPAQTSPSVQDSPSTPVQMP) is disordered. The BON 2 domain maps to 119 to 188 (DTSRIAKAVL…VDISGLRVAQ (70 aa)). The 48-residue stretch at 204–251 (TVYTVKPGDSLSKIAEHYYGDQMEYKKIAHYNNISNPDLIQPGQKLRI) folds into the LysM domain.

This is an uncharacterized protein from Deinococcus radiodurans (strain ATCC 13939 / DSM 20539 / JCM 16871 / CCUG 27074 / LMG 4051 / NBRC 15346 / NCIMB 9279 / VKM B-1422 / R1).